The sequence spans 229 residues: Potassium/proton antiporter CemA (229 aa).

Transmembrane regions (helical) follow at residues 11–31 (TTPFLYLASIVFLPWWISLFF), 118–138 (IISFVILSVCSILGNEELVIL), 158–178 (LLALTDFLFGFHTISAWELLI), and 190–210 (LLVCLFPSVLHTIYYFWTFNY).

It belongs to the CemA family.

The protein resides in the plastid. It localises to the chloroplast inner membrane. The enzyme catalyses K(+)(in) + H(+)(out) = K(+)(out) + H(+)(in). Functionally, contributes to K(+)/H(+) antiport activity by supporting proton efflux to control proton extrusion and homeostasis in chloroplasts in a light-dependent manner to modulate photosynthesis. Prevents excessive induction of non-photochemical quenching (NPQ) under continuous-light conditions. Indirectly promotes efficient inorganic carbon uptake into chloroplasts. The chain is Potassium/proton antiporter CemA from Pelargonium hortorum (Common geranium).